Reading from the N-terminus, the 500-residue chain is Glycerol kinase (500 aa).

Threonine 13 is an ADP binding site. Positions 13, 14, and 15 each coordinate ATP. Threonine 13 lines the sn-glycerol 3-phosphate pocket. Arginine 17 is a binding site for ADP. Sn-glycerol 3-phosphate is bound by residues arginine 83, glutamate 84, tyrosine 136, and aspartate 246. 5 residues coordinate glycerol: arginine 83, glutamate 84, tyrosine 136, aspartate 246, and glutamine 247. Residues threonine 268 and glycine 311 each contribute to the ADP site. ATP-binding residues include threonine 268, glycine 311, glutamine 315, and glycine 412. The ADP site is built by glycine 412 and asparagine 416.

This sequence belongs to the FGGY kinase family.

It catalyses the reaction glycerol + ATP = sn-glycerol 3-phosphate + ADP + H(+). The protein operates within polyol metabolism; glycerol degradation via glycerol kinase pathway; sn-glycerol 3-phosphate from glycerol: step 1/1. With respect to regulation, inhibited by fructose 1,6-bisphosphate (FBP). In terms of biological role, key enzyme in the regulation of glycerol uptake and metabolism. Catalyzes the phosphorylation of glycerol to yield sn-glycerol 3-phosphate. This is Glycerol kinase from Francisella tularensis subsp. novicida (strain U112).